The sequence spans 487 residues: Sodium-coupled neutral amino acid symporter 1 (487 aa).

Residues 1-74 (MMHFKSGLEL…EYIPGTTSLG (74 aa)) lie on the Cytoplasmic side of the membrane. Serine 6 carries the phosphoserine modification. Threonine 11 carries the phosphothreonine modification. Residues serine 25, serine 28, serine 49, and serine 52 each carry the phosphoserine modification. Threonine 54 carries the phosphothreonine modification. Phosphoserine is present on serine 56. Residues 75–97 (MSVFNLSNAIMGSGILGLAFALA) traverse the membrane as a helical segment. Residues 98–112 (NTGILLFLVLLTSVT) are Extracellular-facing. Residues 113–133 (LLSIYSINLLLICSKETGCMV) traverse the membrane as a helical segment. Over 134-147 (YEKLGEQVFGTTGK) the chain is Cytoplasmic. A helical membrane pass occupies residues 148–168 (FVIFGATSLQNTGAMLSYLFI). The Extracellular segment spans residues 169 to 188 (VKNELPSAIKFLMGKEETFS). The helical transmembrane segment at 189-211 (AWYVDGRVLVVIVTFGIILPLCL) threads the bilayer. The Cytoplasmic segment spans residues 212 to 216 (LKNLG). Residues 217 to 237 (YLGYTSGFSLSCMVFFLIVVI) traverse the membrane as a helical segment. Residues 238–275 (YKKFQIPCIVPELNSTISANSTNADTCTPKYVTLNSKT) lie on the Extracellular side of the membrane. Cysteine 245 and cysteine 264 form a disulfide bridge. N-linked (GlcNAc...) asparagine glycans are attached at residues asparagine 251 and asparagine 257. The chain crosses the membrane as a helical span at residues 276-296 (VYALPTIAFAFVCHPSVLPIY). The Cytoplasmic portion of the chain corresponds to 297–312 (SELKDRSQKKMQMVSN). A helical membrane pass occupies residues 313 to 333 (ISFFAMFVMYFLTAIFGYLTF). Residues 334–350 (YDNVQSDLLHKYQGKDD) lie on the Extracellular side of the membrane. Residues 351–371 (ILILTVRLAVIVAVILTVPVL) traverse the membrane as a helical segment. At 372–393 (FFTVRSSLFELAKKTKFNLCRH) the chain is on the cytoplasmic side. A helical transmembrane segment spans residues 394–414 (TVVTCILLVVINLLVISIPSM). The Extracellular segment spans residues 415 to 416 (KD). The helical transmembrane segment at 417–437 (IFGVVGVTSANMLIFILPSSL) threads the bilayer. Topologically, residues 438 to 452 (YLKITDQDGDKGTQR) are cytoplasmic. The chain crosses the membrane as a helical span at residues 453–473 (IWAALFLGLGVLFSLVSIPLV). Residues 474–487 (IYDWACSSSSDEGH) lie on the Extracellular side of the membrane.

The protein belongs to the amino acid/polyamine transporter 2 family. Post-translationally, N-glycosylation plays an important role in the L-glutamine transport.

It is found in the cell membrane. It carries out the reaction L-glutamine(in) + Na(+)(in) = L-glutamine(out) + Na(+)(out). It catalyses the reaction L-alanine(in) + Na(+)(in) = L-alanine(out) + Na(+)(out). The catalysed reaction is L-asparagine(in) + Na(+)(in) = L-asparagine(out) + Na(+)(out). The enzyme catalyses L-histidine(in) + Na(+)(in) = L-histidine(out) + Na(+)(out). It carries out the reaction L-serine(in) + Na(+)(in) = L-serine(out) + Na(+)(out). It catalyses the reaction L-cysteine(in) + Na(+)(in) = L-cysteine(out) + Na(+)(out). The catalysed reaction is L-methionine(in) + Na(+)(in) = L-methionine(out) + Na(+)(out). The enzyme catalyses glycine(in) + Na(+)(in) = glycine(out) + Na(+)(out). It carries out the reaction L-threonine(in) + Na(+)(in) = L-threonine(out) + Na(+)(out). It catalyses the reaction L-proline(in) + Na(+)(in) = L-proline(out) + Na(+)(out). Its activity is regulated as follows. Inhibited by alpha-(methylamino)isobutyric acid (MeAIB). Inhibited by lithium, potassium, choline ions, N-methylglucamine. The pH dependence has an allosteric effect on the transport. Its function is as follows. Symporter that cotransports short-chain neutral amino acids and sodium ions from the extraccellular to the intracellular side of the cell membrane. The transport is elctrogenic, pH dependent and driven by the Na(+) electrochemical gradient. Participates in the astroglia-derived glutamine transport into GABAergic interneurons for neurotransmitter GABA de novo synthesis. May also contributes to amino acid transport in placental trophoblast. Regulates synaptic plasticity. In Pongo abelii (Sumatran orangutan), this protein is Sodium-coupled neutral amino acid symporter 1.